The sequence spans 758 residues: MAVHRGSARAAPASDKVQKNKPAQTSGLEQGSRMARIFGFEWADLSSWQSVVTLLNRPTDPANLAVFRFLFAFLMLLDIPQERGLSSLDRKYLDGLDVCRFPLLDALRPLPLDWMYLVYTIMFLGALGMMLGLWYRLSCMLFLLPYWYVFLLDKTSWNNHSYLYGLLAFQLTFMDANHYWSVDGLLSAQKKNAHVPLWNYTVLRGQIFIVYFIAGVKKLDADWVEGYSMEHLSRHWLFSPFKLVLSEELTSLLVVHWCGLLLDLSAGFLLFFDASRPIGLVFVSYFHCMNSQLFSIGMFPYVMLASSPLFCSAEWPRKLVARCPKRLQELLPAKAAPRPSASCVYKRARAKAGQKPGLRHHLGTVFTLLYLLEQLFLPYSHFLTQGYNNWTNGLYGYSWDMMVHSRSHQHVKITYRDGLTGELGYLNPGVFTQSRRWKDHADMLKQYATCLSLLLPKYNVTEPQIYFDIWVSINDRFQQRLFDPRVDIVQAVWSPFRRTPWVQPLLMDLSPWRTKLQDIKSSLDNHTEVVFIADFPGLHLENFVSEDLGNTSIQLLQGEVTVELVAEQKNQTLREGEKMQLPAGEYHKVYTVSSSPSCYMYIYVNTTEVALEQDLAYLQELKEKVENGSETGPLPPELQPLLEGEVKGGPEPTPLVQTFLRRQRKLQEIERRRNSPLHERFLRFVLRKLYVFRRSFLMTRISLRNLLFGRPSLEQLAQEVTYANLRPFEPVDESSASNTDSSDPHPSEPDSEHVHSEL.

A disordered region spans residues 1-29; sequence MAVHRGSARAAPASDKVQKNKPAQTSGLE. An N-acetylalanine modification is found at Ala2. The Cytoplasmic segment spans residues 2–60; that stretch reads AVHRGSARAAPASDKVQKNKPAQTSGLEQGSRMARIFGFEWADLSSWQSVVTLLNRPTD. A helical membrane pass occupies residues 61–81; that stretch reads PANLAVFRFLFAFLMLLDIPQ. Over 82–113 the chain is Lumenal; that stretch reads ERGLSSLDRKYLDGLDVCRFPLLDALRPLPLD. Cys99 and Cys450 form a disulfide bridge. Residues 114 to 134 traverse the membrane as a helical segment; sequence WMYLVYTIMFLGALGMMLGLW. Over 135–136 the chain is Cytoplasmic; the sequence is YR. A helical transmembrane segment spans residues 137-157; sequence LSCMLFLLPYWYVFLLDKTSW. At 158–292 the chain is on the lumenal side; that stretch reads NNHSYLYGLL…VSYFHCMNSQ (135 aa). A helical transmembrane segment spans residues 293–313; it reads LFSIGMFPYVMLASSPLFCSA. At 314–361 the chain is on the cytoplasmic side; it reads EWPRKLVARCPKRLQELLPAKAAPRPSASCVYKRARAKAGQKPGLRHH. A helical membrane pass occupies residues 362 to 382; that stretch reads LGTVFTLLYLLEQLFLPYSHF. The Lumenal segment spans residues 383–758; that stretch reads LTQGYNNWTN…PDSEHVHSEL (376 aa). The segment at 727 to 758 is disordered; that stretch reads PFEPVDESSASNTDSSDPHPSEPDSEHVHSEL. Positions 742–758 are enriched in basic and acidic residues; the sequence is SDPHPSEPDSEHVHSEL.

This sequence belongs to the vitamin K-dependent gamma-carboxylase family. In terms of assembly, monomer. Interacts with CALU.

The protein resides in the endoplasmic reticulum membrane. It carries out the reaction 4-carboxy-L-glutamyl-[protein] + 2,3-epoxyphylloquinone + H2O + H(+) = phylloquinol + L-glutamyl-[protein] + CO2 + O2. In terms of biological role, mediates the vitamin K-dependent carboxylation of glutamate residues to calcium-binding gamma-carboxyglutamate (Gla) residues with the concomitant conversion of the reduced hydroquinone form of vitamin K to vitamin K epoxide. Catalyzes gamma-carboxylation of various proteins, such as blood coagulation factors (F2, F7, F9 and F10), osteocalcin (BGLAP) or matrix Gla protein (MGP). The sequence is that of Vitamin K-dependent gamma-carboxylase (Ggcx) from Rattus norvegicus (Rat).